Reading from the N-terminus, the 364-residue chain is Dihydroorotate dehydrogenase (quinone) (364 aa).

FMN is bound by residues 61–65 (AGFDK) and threonine 85. Lysine 65 is a substrate binding site. 110–114 (NRMGF) contacts substrate. The FMN site is built by asparagine 139 and asparagine 170. Residue asparagine 170 coordinates substrate. Serine 173 serves as the catalytic Nucleophile. A substrate-binding site is contributed by asparagine 175. FMN contacts are provided by lysine 214 and alanine 242. Residue 243–244 (NT) participates in substrate binding. FMN is bound by residues glycine 266, glycine 295, and 316–317 (YS).

Belongs to the dihydroorotate dehydrogenase family. Type 2 subfamily. As to quaternary structure, monomer. It depends on FMN as a cofactor.

Its subcellular location is the cell membrane. It catalyses the reaction (S)-dihydroorotate + a quinone = orotate + a quinol. It functions in the pathway pyrimidine metabolism; UMP biosynthesis via de novo pathway; orotate from (S)-dihydroorotate (quinone route): step 1/1. Its function is as follows. Catalyzes the conversion of dihydroorotate to orotate with quinone as electron acceptor. The chain is Dihydroorotate dehydrogenase (quinone) from Rhodopseudomonas palustris (strain TIE-1).